A 396-amino-acid chain; its full sequence is Probable sugar efflux transporter (396 aa).

Residues Met-1–Arg-14 are Cytoplasmic-facing. Residues Val-15–Leu-35 traverse the membrane as a helical segment. The Periplasmic segment spans residues Leu-36 to Gln-49. Residues Val-50–Leu-70 form a helical membrane-spanning segment. Topologically, residues Met-71 to Leu-80 are cytoplasmic. The chain crosses the membrane as a helical span at residues Leu-81 to Phe-101. A topological domain (periplasmic) is located at residue Thr-102. A helical transmembrane segment spans residues Val-103 to Ala-123. At Ser-124–Arg-135 the chain is on the cytoplasmic side. Residues Ala-136–Leu-156 form a helical membrane-spanning segment. Residues Gly-157 to Thr-169 lie on the Periplasmic side of the membrane. Residues Phe-170–Leu-190 traverse the membrane as a helical segment. The Cytoplasmic segment spans residues Leu-191 to Arg-208. The helical transmembrane segment at Pro-209 to Tyr-229 threads the bilayer. At Ser-230–Asn-245 the chain is on the periplasmic side. A helical transmembrane segment spans residues Phe-246–Gly-266. The Cytoplasmic segment spans residues Lys-267–Ser-274. Residues Ala-275–Ala-295 form a helical membrane-spanning segment. The Periplasmic segment spans residues Asn-296–Glu-298. Residues Ile-299–Met-319 traverse the membrane as a helical segment. Residues Gln-320–Asp-332 lie on the Cytoplasmic side of the membrane. A helical transmembrane segment spans residues Val-333–Gly-353. At Asn-354–Ser-363 the chain is on the periplasmic side. The helical transmembrane segment at Met-364–Phe-384 threads the bilayer. Residues Arg-385–Gln-396 are Cytoplasmic-facing.

The protein belongs to the major facilitator superfamily. SotB (TC 2.A.1.2) family.

The protein resides in the cell inner membrane. In terms of biological role, involved in the efflux of sugars. The physiological role may be the reduction of the intracellular concentration of toxic sugars or sugar metabolites. The polypeptide is Probable sugar efflux transporter (Shigella flexneri).